We begin with the raw amino-acid sequence, 1441 residues long: Protein clueless (1441 aa).

Disordered regions lie at residues 1 to 79 (MALD…EAAT) and 106 to 131 (VAANDESESAEQQAAENAASSGELES). Residues 8–22 (KNSSSAATGDANTVK) are compositionally biased toward polar residues. The span at 54 to 63 (AKKKGKKNRN) shows a compositional bias: basic residues. Composition is skewed to low complexity over residues 64–79 (KSPPIATDAETTEAAT) and 106–126 (VAANDESESAEQQAAENAASS). A Phosphoserine modification is found at Ser273. One can recognise a Clu domain in the interval 427-669 (RAEDAFSSKL…RTFPPDVNFL (243 aa)). Residues 726–753 (KKQDEAKEGTKEPASETEKESPPKAITE) are compositionally biased toward basic and acidic residues. Disordered regions lie at residues 726 to 769 (KKQD…GETK) and 961 to 1009 (EIHK…SGGT). Residues 964 to 977 (KKRTNTKYNKHKSS) are compositionally biased toward basic residues. Over residues 978–1009 (KSSGSGSKQSGQTSNQNGTSTSPSSSTASGGT) the composition is skewed to low complexity. 3 TPR repeats span residues 1109–1142 (AYNFYTTGQSKIQQGLFKEGYELISEALNLLNNV), 1235–1268 (ALIDSNISLILHALGEYELSLRFIEHALKLNLKY), and 1270–1303 (GAKAMHVAVSYHLMARTQSCMGDFRSALNNEKET).

It belongs to the CLU family.

The protein resides in the cytoplasm. MRNA-binding protein involved in proper cytoplasmic distribution of mitochondria. This chain is Protein clueless, found in Drosophila willistoni (Fruit fly).